The following is a 597-amino-acid chain: Aspartate--tRNA(Asp/Asn) ligase (597 aa).

Glutamate 178 contacts L-aspartate. The segment at 202-205 (QLFK) is aspartate. Arginine 224 is an L-aspartate binding site. ATP is bound by residues 224-226 (RDE) and glutamine 233. Histidine 458 lines the L-aspartate pocket. An ATP-binding site is contributed by glutamate 488. Residue arginine 495 participates in L-aspartate binding. 540 to 543 (GLDR) contacts ATP.

Belongs to the class-II aminoacyl-tRNA synthetase family. Type 1 subfamily. In terms of assembly, homodimer.

The protein resides in the cytoplasm. The enzyme catalyses tRNA(Asx) + L-aspartate + ATP = L-aspartyl-tRNA(Asx) + AMP + diphosphate. In terms of biological role, aspartyl-tRNA synthetase with relaxed tRNA specificity since it is able to aspartylate not only its cognate tRNA(Asp) but also tRNA(Asn). Reaction proceeds in two steps: L-aspartate is first activated by ATP to form Asp-AMP and then transferred to the acceptor end of tRNA(Asp/Asn). The protein is Aspartate--tRNA(Asp/Asn) ligase of Cyanothece sp. (strain PCC 7425 / ATCC 29141).